The primary structure comprises 309 residues: Probable 3-hydroxyacyl-CoA dehydrogenase B0272.3 (309 aa).

It belongs to the 3-hydroxyacyl-CoA dehydrogenase family. As to quaternary structure, homodimer.

It is found in the mitochondrion matrix. It carries out the reaction a (3S)-3-hydroxyacyl-CoA + NAD(+) = a 3-oxoacyl-CoA + NADH + H(+). It functions in the pathway lipid metabolism; fatty acid beta-oxidation. The chain is Probable 3-hydroxyacyl-CoA dehydrogenase B0272.3 from Caenorhabditis elegans.